Here is a 355-residue protein sequence, read N- to C-terminus: UDP-N-acetylglucosamine--N-acetylmuramyl-(pentapeptide) pyrophosphoryl-undecaprenol N-acetylglucosamine transferase (355 aa).

Residues 14 to 16 (TGG), Asn-126, Arg-162, Ser-190, Ile-244, and Gln-289 each bind UDP-N-acetyl-alpha-D-glucosamine.

Belongs to the glycosyltransferase 28 family. MurG subfamily.

The protein localises to the cell inner membrane. It carries out the reaction di-trans,octa-cis-undecaprenyl diphospho-N-acetyl-alpha-D-muramoyl-L-alanyl-D-glutamyl-meso-2,6-diaminopimeloyl-D-alanyl-D-alanine + UDP-N-acetyl-alpha-D-glucosamine = di-trans,octa-cis-undecaprenyl diphospho-[N-acetyl-alpha-D-glucosaminyl-(1-&gt;4)]-N-acetyl-alpha-D-muramoyl-L-alanyl-D-glutamyl-meso-2,6-diaminopimeloyl-D-alanyl-D-alanine + UDP + H(+). Its pathway is cell wall biogenesis; peptidoglycan biosynthesis. In terms of biological role, cell wall formation. Catalyzes the transfer of a GlcNAc subunit on undecaprenyl-pyrophosphoryl-MurNAc-pentapeptide (lipid intermediate I) to form undecaprenyl-pyrophosphoryl-MurNAc-(pentapeptide)GlcNAc (lipid intermediate II). The chain is UDP-N-acetylglucosamine--N-acetylmuramyl-(pentapeptide) pyrophosphoryl-undecaprenol N-acetylglucosamine transferase from Paracidovorax citrulli (strain AAC00-1) (Acidovorax citrulli).